The sequence spans 252 residues: Imidazole glycerol phosphate synthase subunit HisF (252 aa).

Catalysis depends on residues Asp11 and Asp130.

It belongs to the HisA/HisF family. Heterodimer of HisH and HisF.

The protein localises to the cytoplasm. The catalysed reaction is 5-[(5-phospho-1-deoxy-D-ribulos-1-ylimino)methylamino]-1-(5-phospho-beta-D-ribosyl)imidazole-4-carboxamide + L-glutamine = D-erythro-1-(imidazol-4-yl)glycerol 3-phosphate + 5-amino-1-(5-phospho-beta-D-ribosyl)imidazole-4-carboxamide + L-glutamate + H(+). The protein operates within amino-acid biosynthesis; L-histidine biosynthesis; L-histidine from 5-phospho-alpha-D-ribose 1-diphosphate: step 5/9. Its function is as follows. IGPS catalyzes the conversion of PRFAR and glutamine to IGP, AICAR and glutamate. The HisF subunit catalyzes the cyclization activity that produces IGP and AICAR from PRFAR using the ammonia provided by the HisH subunit. The chain is Imidazole glycerol phosphate synthase subunit HisF from Hyphomonas neptunium (strain ATCC 15444).